We begin with the raw amino-acid sequence, 101 residues long: NAD(P)H-quinone oxidoreductase subunit 4L, chloroplastic (101 aa).

The next 3 helical transmembrane spans lie at methionine 2–isoleucine 22, methionine 32–phenylalanine 52, and isoleucine 61–valine 81.

It belongs to the complex I subunit 4L family. As to quaternary structure, NDH is composed of at least 16 different subunits, 5 of which are encoded in the nucleus.

The protein localises to the plastid. It is found in the chloroplast thylakoid membrane. It catalyses the reaction a plastoquinone + NADH + (n+1) H(+)(in) = a plastoquinol + NAD(+) + n H(+)(out). The enzyme catalyses a plastoquinone + NADPH + (n+1) H(+)(in) = a plastoquinol + NADP(+) + n H(+)(out). Functionally, NDH shuttles electrons from NAD(P)H:plastoquinone, via FMN and iron-sulfur (Fe-S) centers, to quinones in the photosynthetic chain and possibly in a chloroplast respiratory chain. The immediate electron acceptor for the enzyme in this species is believed to be plastoquinone. Couples the redox reaction to proton translocation, and thus conserves the redox energy in a proton gradient. This chain is NAD(P)H-quinone oxidoreductase subunit 4L, chloroplastic, found in Panax ginseng (Korean ginseng).